A 294-amino-acid chain; its full sequence is tRNA-uridine aminocarboxypropyltransferase 1 (294 aa).

Residues 158–185 (DMQNDSSCEPSLKRPKCSQQYDKSKNEG) are disordered. The short motif at 202–205 (DSTW) is the DXTW element.

The protein belongs to the TDD superfamily. DTWD1 family.

The protein resides in the nucleus. It catalyses the reaction a uridine in tRNA + S-adenosyl-L-methionine = a 3-[(3S)-3-amino-3-carboxypropyl]uridine in tRNA + S-methyl-5'-thioadenosine + H(+). Functionally, catalyzes the formation of 3-(3-amino-3-carboxypropyl)uridine (acp3U) at position 20 in the D-loop of several cytoplasmic tRNAs (acp3U(20)). The polypeptide is tRNA-uridine aminocarboxypropyltransferase 1 (Xenopus tropicalis (Western clawed frog)).